A 158-amino-acid chain; its full sequence is Regulator of sigma D (158 aa).

The protein belongs to the Rsd/AlgQ family. As to quaternary structure, interacts with RpoD.

The protein resides in the cytoplasm. Binds RpoD and negatively regulates RpoD-mediated transcription activation by preventing the interaction between the primary sigma factor RpoD with the catalytic core of the RNA polymerase and with promoter DNA. May be involved in replacement of the RNA polymerase sigma subunit from RpoD to RpoS during the transition from exponential growth to the stationary phase. This chain is Regulator of sigma D, found in Escherichia coli (strain UTI89 / UPEC).